Consider the following 224-residue polypeptide: Probable septum site-determining protein MinC (224 aa).

Belongs to the MinC family. In terms of assembly, interacts with MinD and FtsZ.

Cell division inhibitor that blocks the formation of polar Z ring septums. Rapidly oscillates between the poles of the cell to destabilize FtsZ filaments that have formed before they mature into polar Z rings. Prevents FtsZ polymerization. This chain is Probable septum site-determining protein MinC, found in Shewanella amazonensis (strain ATCC BAA-1098 / SB2B).